We begin with the raw amino-acid sequence, 269 residues long: Phosphatidylglycerol--prolipoprotein diacylglyceryl transferase (269 aa).

Transmembrane regions (helical) follow at residues leucine 17 to alanine 37, leucine 56 to tyrosine 76, tryptophan 92 to phenylalanine 112, phenylalanine 120 to isoleucine 140, proline 174 to tyrosine 194, methionine 202 to valine 222, and leucine 237 to leucine 257. Residue arginine 139 participates in a 1,2-diacyl-sn-glycero-3-phospho-(1'-sn-glycerol) binding.

The protein belongs to the Lgt family.

It is found in the cell inner membrane. The catalysed reaction is L-cysteinyl-[prolipoprotein] + a 1,2-diacyl-sn-glycero-3-phospho-(1'-sn-glycerol) = an S-1,2-diacyl-sn-glyceryl-L-cysteinyl-[prolipoprotein] + sn-glycerol 1-phosphate + H(+). It functions in the pathway protein modification; lipoprotein biosynthesis (diacylglyceryl transfer). Its function is as follows. Catalyzes the transfer of the diacylglyceryl group from phosphatidylglycerol to the sulfhydryl group of the N-terminal cysteine of a prolipoprotein, the first step in the formation of mature lipoproteins. This is Phosphatidylglycerol--prolipoprotein diacylglyceryl transferase from Pseudomonas entomophila (strain L48).